The following is a 108-amino-acid chain: Peptidyl-prolyl cis-trans isomerase FKBP1A (108 aa).

Positions 20–108 constitute a PPIase FKBP-type domain; the sequence is GQTCVVHYTG…VFDVELLKLE (89 aa). The residue at position 53 (K53) is an N6-acetyllysine; alternate. K53 is modified (N6-succinyllysine; alternate).

Belongs to the FKBP-type PPIase family. FKBP1 subfamily. In terms of assembly, interacts with TGFBR1; prevents TGFBR1 phosphorylation by TGFBR2 and stabilizes it in the inactive conformation. Interacts with ACVR1B and SMAD7. Identified in a complex composed of RYR1, PDE4D, PKA, FKBP1A and protein phosphatase 1 (PP1). Interacts directly with RYR2 and RYR3. Interacts directly with RYR1. Interacts with GLMN; rapamycin and FK506 abolish the interaction with GLMN in a dose dependent manner.

It is found in the cytoplasm. The protein localises to the cytosol. The protein resides in the sarcoplasmic reticulum membrane. The catalysed reaction is [protein]-peptidylproline (omega=180) = [protein]-peptidylproline (omega=0). Its activity is regulated as follows. Inhibited by both FK506 and rapamycin. Keeps in an inactive conformation TGFBR1, the TGF-beta type I serine/threonine kinase receptor, preventing TGF-beta receptor activation in absence of ligand. Recruits SMAD7 to ACVR1B which prevents the association of SMAD2 and SMAD3 with the activin receptor complex, thereby blocking the activin signal. May modulate the RYR1 calcium channel activity. PPIases accelerate the folding of proteins. It catalyzes the cis-trans isomerization of proline imidic peptide bonds in oligopeptides. This chain is Peptidyl-prolyl cis-trans isomerase FKBP1A (Fkbp1a), found in Mus musculus (Mouse).